The primary structure comprises 141 residues: Hemoglobin subunit alpha-1 (141 aa).

Positions 1–141 (VLSPEDKNNV…VSTVLTSKYR (141 aa)) constitute a Globin domain. Histidine 58 lines the O2 pocket. Histidine 87 lines the heme b pocket.

It belongs to the globin family. As to quaternary structure, heterotetramer of two alpha chains and two beta chains. Red blood cells.

Involved in oxygen transport from the lung to the various peripheral tissues. The protein is Hemoglobin subunit alpha-1 of Tadarida brasiliensis (Brazilian free-tailed bat).